Here is a 193-residue protein sequence, read N- to C-terminus: CDP-diacylglycerol--glycerol-3-phosphate 3-phosphatidyltransferase (193 aa).

The next 4 membrane-spanning stretches (helical) occupy residues 8–28 (ITLARIALIPIFMIIMLAPFD), 39–59 (IPVAHLAGAILFIIASTTDWV), 88–108 (AALIILVQFDLAPAWMVIVII), and 157–177 (LVSFPFADLALWVAVFFTVVS).

The protein belongs to the CDP-alcohol phosphatidyltransferase class-I family.

It localises to the cell membrane. It carries out the reaction a CDP-1,2-diacyl-sn-glycerol + sn-glycerol 3-phosphate = a 1,2-diacyl-sn-glycero-3-phospho-(1'-sn-glycero-3'-phosphate) + CMP + H(+). It functions in the pathway phospholipid metabolism; phosphatidylglycerol biosynthesis; phosphatidylglycerol from CDP-diacylglycerol: step 1/2. Functionally, this protein catalyzes the committed step to the synthesis of the acidic phospholipids. In Bacillus subtilis (strain 168), this protein is CDP-diacylglycerol--glycerol-3-phosphate 3-phosphatidyltransferase (pgsA).